A 137-amino-acid polypeptide reads, in one-letter code: MWNPNAGPNPYPPQVVCPGGSNPACPPPLNPAFPPGPCPPGIPQGNPAFPPCRPPYPVPQPGCPGYQPSGPYPPPYPPPAPGMCPVNPPAPGMVGPGIVIDKKTRKKMKKAHKKSHKHHKHGKHSSSSSSSSSSDSD.

2 disordered regions span residues 26–54 (PPPL…PCRP) and 94–137 (VGPG…SDSD). The segment covering 103 to 124 (KTRKKMKKAHKKSHKHHKHGKH) has biased composition (basic residues). Residues 125–137 (SSSSSSSSSSDSD) show a composition bias toward low complexity.

It is found in the nucleus. Its function is as follows. Negatively regulates TSP1 expression at the level of transcription. This down-regulation was shown to reduce taxane-induced apoptosis. This is Proline-rich protein 13 (Prr13) from Mus musculus (Mouse).